The sequence spans 320 residues: Ferrochelatase (320 aa).

Fe cation contacts are provided by H194 and E275.

The protein belongs to the ferrochelatase family. As to quaternary structure, monomer.

It localises to the cytoplasm. It catalyses the reaction heme b + 2 H(+) = protoporphyrin IX + Fe(2+). The protein operates within porphyrin-containing compound metabolism; protoheme biosynthesis; protoheme from protoporphyrin-IX: step 1/1. Its function is as follows. Catalyzes the ferrous insertion into protoporphyrin IX. This chain is Ferrochelatase, found in Shigella flexneri serotype 5b (strain 8401).